The following is a 238-amino-acid chain: 3-dehydroquinate dehydratase (238 aa).

Residues 35-37 (ELR) and R70 contribute to the 3-dehydroquinate site. H133 serves as the catalytic Proton donor/acceptor. Catalysis depends on K160, which acts as the Schiff-base intermediate with substrate. Residues R202 and Q225 each contribute to the 3-dehydroquinate site.

Belongs to the type-I 3-dehydroquinase family. As to quaternary structure, homodimer.

It catalyses the reaction 3-dehydroquinate = 3-dehydroshikimate + H2O. It functions in the pathway metabolic intermediate biosynthesis; chorismate biosynthesis; chorismate from D-erythrose 4-phosphate and phosphoenolpyruvate: step 3/7. Involved in the third step of the chorismate pathway, which leads to the biosynthesis of aromatic amino acids. Catalyzes the cis-dehydration of 3-dehydroquinate (DHQ) and introduces the first double bond of the aromatic ring to yield 3-dehydroshikimate. The polypeptide is 3-dehydroquinate dehydratase (Staphylococcus aureus (strain MRSA252)).